Reading from the N-terminus, the 47-residue chain is MKKFRWVILIIVALVCLLLWAQVFNIMCDQDVQFFNGICAINKFIPW.

The helical transmembrane segment at 6–26 threads the bilayer; that stretch reads WVILIIVALVCLLLWAQVFNI.

It belongs to the MgrB family. As to quaternary structure, may form homooligomers. Probably interacts with the periplasmic domain of PhoQ.

The protein localises to the cell inner membrane. Functionally, phoP-regulated transcription is redox-sensitive, being activated when the periplasm becomes more reducing. MgrB acts between DsbA/DsbB and PhoP/PhoQ in this pathway. Represses PhoP/PhoQ signaling, possibly by binding to the periplasmic domain of PhoQ, altering its activity and that of downstream effector PhoP. This Citrobacter koseri (strain ATCC BAA-895 / CDC 4225-83 / SGSC4696) protein is PhoP/PhoQ regulator MgrB.